The sequence spans 86 residues: Sec-independent protein translocase protein TatA (86 aa).

Residues 1–21 (MGGISIWQLLIIAVIVVLLFG) traverse the membrane as a helical segment. Residues 42-86 (AIGDDNQPQQAQKTSSDADFETKNITEKQSVAQSETSESKNKEQV) form a disordered region. Polar residues-rich tracts occupy residues 47–58 (NQPQQAQKTSSD) and 68–77 (EKQSVAQSET).

Belongs to the TatA/E family. The Tat system comprises two distinct complexes: a TatABC complex, containing multiple copies of TatA, TatB and TatC subunits, and a separate TatA complex, containing only TatA subunits. Substrates initially bind to the TatABC complex, which probably triggers association of the separate TatA complex to form the active translocon.

It is found in the cell inner membrane. In terms of biological role, part of the twin-arginine translocation (Tat) system that transports large folded proteins containing a characteristic twin-arginine motif in their signal peptide across membranes. TatA could form the protein-conducting channel of the Tat system. This chain is Sec-independent protein translocase protein TatA, found in Photorhabdus laumondii subsp. laumondii (strain DSM 15139 / CIP 105565 / TT01) (Photorhabdus luminescens subsp. laumondii).